The following is a 338-amino-acid chain: Phosphate transport system permease protein PstC 1 (338 aa).

A run of 8 helical transmembrane segments spans residues G19–I39, T93–V113, A123–G143, A144–P164, G181–T201, L232–G252, T254–A274, and T295–L315. Residues I87–A320 enclose the ABC transmembrane type-1 domain.

This sequence belongs to the binding-protein-dependent transport system permease family. CysTW subfamily.

It is found in the cell membrane. Part of the binding-protein-dependent transport system for phosphate; probably responsible for the translocation of the substrate across the membrane. In Mycobacterium bovis (strain ATCC BAA-935 / AF2122/97), this protein is Phosphate transport system permease protein PstC 1 (pstC1).